The primary structure comprises 43 residues: Protein PsbN (43 aa).

The chain crosses the membrane as a helical span at residues Thr5–Phe27.

The protein belongs to the PsbN family.

Its subcellular location is the plastid. The protein localises to the chloroplast thylakoid membrane. In terms of biological role, may play a role in photosystem I and II biogenesis. In Chlorokybus atmophyticus (Soil alga), this protein is Protein PsbN.